Here is a 182-residue protein sequence, read N- to C-terminus: Thymidine kinase (182 aa).

8-15 contacts ATP; that stretch reads GPMFSGKT. E85 acts as the Proton acceptor in catalysis. F117 contributes to the substrate binding site. Zn(2+) contacts are provided by C142 and C145. A substrate-binding site is contributed by 161 to 165; the sequence is IIEIG. The Zn(2+) site is built by C174 and C177.

This sequence belongs to the thymidine kinase family.

The catalysed reaction is thymidine + ATP = dTMP + ADP + H(+). This Amsacta moorei entomopoxvirus (AmEPV) protein is Thymidine kinase (TK).